The following is a 330-amino-acid chain: Succinylglutamate desuccinylase (330 aa).

3 residues coordinate Zn(2+): His-53, Glu-56, and His-147. Residue Glu-210 is part of the active site.

The protein belongs to the AspA/AstE family. Succinylglutamate desuccinylase subfamily. Zn(2+) is required as a cofactor.

The catalysed reaction is N-succinyl-L-glutamate + H2O = L-glutamate + succinate. The protein operates within amino-acid degradation; L-arginine degradation via AST pathway; L-glutamate and succinate from L-arginine: step 5/5. Transforms N(2)-succinylglutamate into succinate and glutamate. This chain is Succinylglutamate desuccinylase, found in Yersinia enterocolitica serotype O:8 / biotype 1B (strain NCTC 13174 / 8081).